The sequence spans 297 residues: uncharacterized protein (297 aa).

Disordered stretches follow at residues 12–43 (QNNN…TNDN), 65–85 (VPNS…DKPI), 122–151 (KVST…TNET), and 265–297 (SRLS…DQNN). The span at 65-79 (VPNSINVNTSSSGNK) shows a compositional bias: polar residues. Over residues 122–135 (KVSTTTTTTSSTSK) the composition is skewed to low complexity. Positions 140 to 151 (QTITKPNKTNET) are enriched in polar residues. A compositionally biased stretch (low complexity) spans 268-287 (SSNNNNNNNNNNNNNNNNSN).

This is an uncharacterized protein from Dictyostelium discoideum (Social amoeba).